The chain runs to 534 residues: CTP synthase (534 aa).

The interval 1–265 (MKYIIVTGGV…SNYLLKKLIL (265 aa)) is amidoligase domain. Residue serine 12 coordinates CTP. Residue serine 12 coordinates UTP. Residue 13–18 (GLGKGI) coordinates ATP. Residue tyrosine 53 coordinates L-glutamine. Aspartate 70 is a binding site for ATP. The Mg(2+) site is built by aspartate 70 and glutamate 140. Residues 147-149 (DIE), 186-191 (KTKPTQ), and lysine 222 each bind CTP. UTP-binding positions include 186 to 191 (KTKPTQ) and lysine 222. The Glutamine amidotransferase type-1 domain occupies 289–530 (NVAIVGKYTH…MGAMLKKSKE (242 aa)). L-glutamine is bound at residue glycine 352. Catalysis depends on cysteine 379, which acts as the Nucleophile; for glutamine hydrolysis. L-glutamine is bound by residues 380–383 (LGMQ), glutamate 403, and arginine 460. Catalysis depends on residues histidine 503 and glutamate 505.

The protein belongs to the CTP synthase family. As to quaternary structure, homotetramer.

The enzyme catalyses UTP + L-glutamine + ATP + H2O = CTP + L-glutamate + ADP + phosphate + 2 H(+). It catalyses the reaction L-glutamine + H2O = L-glutamate + NH4(+). It carries out the reaction UTP + NH4(+) + ATP = CTP + ADP + phosphate + 2 H(+). Its pathway is pyrimidine metabolism; CTP biosynthesis via de novo pathway; CTP from UDP: step 2/2. Allosterically activated by GTP, when glutamine is the substrate; GTP has no effect on the reaction when ammonia is the substrate. The allosteric effector GTP functions by stabilizing the protein conformation that binds the tetrahedral intermediate(s) formed during glutamine hydrolysis. Inhibited by the product CTP, via allosteric rather than competitive inhibition. Its function is as follows. Catalyzes the ATP-dependent amination of UTP to CTP with either L-glutamine or ammonia as the source of nitrogen. Regulates intracellular CTP levels through interactions with the four ribonucleotide triphosphates. This chain is CTP synthase, found in Methanococcoides burtonii (strain DSM 6242 / NBRC 107633 / OCM 468 / ACE-M).